The following is a 167-amino-acid chain: MPLLDSFKVDHTKMNAPAVRIAKTMLTPKGDNITVFDLRFCIPNKEILSPKGIHTLEHLFAGFMRDHLNGDSIEIIDISPMGCRTGFYMSLIGTPNEQEVSEAWLASMQDVLGVQDQAAIPELNIYQCGSYTEHSLEDAHEIAKNVIARGIGVNKNEDLSLDNSLLK.

The Fe cation site is built by His54, His58, and Cys128.

Belongs to the LuxS family. Homodimer. Fe cation serves as cofactor.

The catalysed reaction is S-(5-deoxy-D-ribos-5-yl)-L-homocysteine = (S)-4,5-dihydroxypentane-2,3-dione + L-homocysteine. Involved in the synthesis of autoinducer 2 (AI-2) which is secreted by bacteria and is used to communicate both the cell density and the metabolic potential of the environment. The regulation of gene expression in response to changes in cell density is called quorum sensing. Catalyzes the transformation of S-ribosylhomocysteine (RHC) to homocysteine (HC) and 4,5-dihydroxy-2,3-pentadione (DPD). This is S-ribosylhomocysteine lyase from Haemophilus influenzae (strain PittGG).